A 60-amino-acid chain; its full sequence is Mastoparan-VT3 (60 aa).

The signal sequence occupies residues 1–27; it reads MKNTILILFTAFIALLGFFGMSAEALA. AXPX repeat units follow at residues 27–30, 31–34, 35–38, and 41–44; these read ADPK, ADPL, AGPN, and ADPE. A propeptide spanning residues 28–45 is cleaved from the precursor; it reads DPKADPLAGPNPDADPEA. Leu59 carries the post-translational modification Leucine amide.

This sequence belongs to the MCD family. Mastoparan subfamily. As to expression, expressed by the venom gland.

The protein resides in the secreted. In terms of biological role, the synthetic peptide shows antimicrobial activities against Gram-negative bacteria (but not against all strains tested), Gram-positive bacteria (all strains tested) and the fungi C.albicans and C.parapsilosis. Exhibits moderate hemolytic activity (25% at 100 ug/ml) against washed human erythrocytes. In Vespa tropica (Greater banded hornet), this protein is Mastoparan-VT3.